The sequence spans 282 residues: tRNA (guanine-N(7)-)-methyltransferase (282 aa).

The segment at 1-29 is disordered; the sequence is MPHAPAKRQKREEYKNALHEDESNAALPK. Residues 10–22 show a composition bias toward basic and acidic residues; sequence KREEYKNALHEDE. Residues Gly104, 153–154, and Cys173 contribute to the S-adenosyl-L-methionine site; that span reads NT. The active site involves Asp176. Residue 255-257 coordinates S-adenosyl-L-methionine; the sequence is TEE.

Belongs to the class I-like SAM-binding methyltransferase superfamily. TrmB family. As to quaternary structure, forms a complex with TRM82.

Its subcellular location is the nucleus. The catalysed reaction is guanosine(46) in tRNA + S-adenosyl-L-methionine = N(7)-methylguanosine(46) in tRNA + S-adenosyl-L-homocysteine. Its pathway is tRNA modification; N(7)-methylguanine-tRNA biosynthesis. Catalyzes the formation of N(7)-methylguanine at position 46 (m7G46) in tRNA. This is tRNA (guanine-N(7)-)-methyltransferase from Phaeosphaeria nodorum (strain SN15 / ATCC MYA-4574 / FGSC 10173) (Glume blotch fungus).